A 152-amino-acid polypeptide reads, in one-letter code: Cell division protein SepF (152 aa).

This sequence belongs to the SepF family. In terms of assembly, homodimer. Interacts with FtsZ.

The protein localises to the cytoplasm. Functionally, cell division protein that is part of the divisome complex and is recruited early to the Z-ring. Probably stimulates Z-ring formation, perhaps through the cross-linking of FtsZ protofilaments. Its function overlaps with FtsA. This Listeria monocytogenes serotype 4b (strain CLIP80459) protein is Cell division protein SepF.